The following is a 119-amino-acid chain: Large ribosomal subunit protein bL20 (119 aa).

Belongs to the bacterial ribosomal protein bL20 family.

In terms of biological role, binds directly to 23S ribosomal RNA and is necessary for the in vitro assembly process of the 50S ribosomal subunit. It is not involved in the protein synthesizing functions of that subunit. This chain is Large ribosomal subunit protein bL20, found in Streptococcus uberis (strain ATCC BAA-854 / 0140J).